The primary structure comprises 419 residues: Innexin-2 (419 aa).

Transmembrane regions (helical) follow at residues 33 to 53 (AWFT…KQYF), 108 to 128 (PLVL…WNLF), 184 to 204 (INYF…MVLL), and 270 to 290 (LYIC…AGMI).

Belongs to the pannexin family.

It localises to the cell membrane. It is found in the cell junction. Its subcellular location is the gap junction. Structural component of the gap junctions. In Caenorhabditis elegans, this protein is Innexin-2 (inx-2).